The following is a 364-amino-acid chain: Chorismate synthase (364 aa).

Positions 41-60 are disordered; sequence MQHDLDRRRPGTSRYTTARR. Residues arginine 48 and arginine 54 each contribute to the NADP(+) site. Residues 125 to 127, 238 to 239, glycine 278, 293 to 297, and arginine 319 contribute to the FMN site; these read RSS, NA, and KPTSS.

This sequence belongs to the chorismate synthase family. As to quaternary structure, homotetramer. FMNH2 serves as cofactor.

The catalysed reaction is 5-O-(1-carboxyvinyl)-3-phosphoshikimate = chorismate + phosphate. The protein operates within metabolic intermediate biosynthesis; chorismate biosynthesis; chorismate from D-erythrose 4-phosphate and phosphoenolpyruvate: step 7/7. Catalyzes the anti-1,4-elimination of the C-3 phosphate and the C-6 proR hydrogen from 5-enolpyruvylshikimate-3-phosphate (EPSP) to yield chorismate, which is the branch point compound that serves as the starting substrate for the three terminal pathways of aromatic amino acid biosynthesis. This reaction introduces a second double bond into the aromatic ring system. The sequence is that of Chorismate synthase from Shewanella putrefaciens (strain CN-32 / ATCC BAA-453).